The primary structure comprises 298 residues: Lysozyme-like protein 1 (298 aa).

Positions 1-16 (MLKLAFVTFLFALASA) are cleaved as a signal peptide. Residues 59–277 (YAYAVDISVP…AAASSKNTDF (219 aa)) enclose the Ch-type lysozyme domain.

The protein belongs to the glycosyl hydrolase 25 family. Expressed in intestine, IL2 and IL6 neurons and some neurons in the head ganglia.

The protein localises to the cytoplasmic vesicle lumen. Involved in resistance to Gram-negative bacterium S.marcescens and to bacterium Gram-positive S.aureus infection. The sequence is that of Lysozyme-like protein 1 from Caenorhabditis elegans.